Consider the following 278-residue polypeptide: Putative B3 domain-containing protein At2g21920 (278 aa).

A DNA-binding region (TF-B3) is located at residues 168–275; sequence ISKTLSRTDV…KFIILNFEYN (108 aa).

It localises to the nucleus. The chain is Putative B3 domain-containing protein At2g21920 from Arabidopsis thaliana (Mouse-ear cress).